The following is a 156-amino-acid chain: Glutaredoxin-2, mitochondrial (156 aa).

A mitochondrion-targeting transit peptide spans 1-19; that stretch reads MSWRRAASVGRRLVASGRI. One can recognise a Glutaredoxin domain in the interval 50-150; that stretch reads VNQIQETISN…PLVHQCYLKK (101 aa). Cys-61 provides a ligand contact to [2Fe-2S] cluster. Lys-67 is a binding site for glutathione. Position 70 is an S-glutathionyl cysteine; alternate (Cys-70). Cysteines 70 and 73 form a disulfide. Glutathione-binding residues include Gln-102 and Val-114. Cys-146 is a binding site for [2Fe-2S] cluster.

The protein belongs to the glutaredoxin family. In terms of assembly, monomer; active form. Homodimer; inactive form. The homodimer is probably linked by 1 2Fe-2S cluster. As to expression, widely expressed. Highly expressed in testis, and at much lower level in kidney and brain.

It localises to the mitochondrion. It is found in the nucleus. With respect to regulation, the 2Fe-2S present in the homodimer leads to inactivation of the enzyme. The 2Fe-2S may serve as a redox sensor: the presence of one-electron oxidants or reductants leading to the loss of the 2Fe-2S cluster, subsequent monomerization and activation of the enzyme. Functionally, glutathione-dependent oxidoreductase that facilitates the maintenance of mitochondrial redox homeostasis upon induction of apoptosis by oxidative stress. Involved in response to hydrogen peroxide and regulation of apoptosis caused by oxidative stress. Acts as a very efficient catalyst of monothiol reactions because of its high affinity for protein glutathione-mixed disulfides. Can receive electrons not only from glutathione (GSH), but also from thioredoxin reductase supporting both monothiol and dithiol reactions. Efficiently catalyzes both glutathionylation and deglutathionylation of mitochondrial complex I, which in turn regulates the superoxide production by the complex. Overexpression decreases the susceptibility to apoptosis and prevents loss of cardiolipin and cytochrome c release. The chain is Glutaredoxin-2, mitochondrial (Glrx2) from Mus musculus (Mouse).